The following is a 466-amino-acid chain: Replication termination factor 1 (466 aa).

DNA-binding domain regions lie at residues 94-249 (RDYT…LRRK) and 250-421 (YNPF…KKTL). 2 consecutive HTH myb-type domains span residues 251-304 (NPFK…QPGE) and 305-363 (INRS…SRDI). 2 consecutive DNA-binding regions (H-T-H motif) follow at residues 278–300 (WSLI…RDYI) and 336–359 (WSLI…YTLI).

The protein resides in the nucleus. Its function is as follows. Mediates site-specific replication termination at the polar replication barrier RTS1, a barrier which ensures that replication of the mat1 locus in S.pombe occurs in the centromere-proximal direction. This chain is Replication termination factor 1 (rtf1), found in Schizosaccharomyces pombe (strain 972 / ATCC 24843) (Fission yeast).